The sequence spans 293 residues: Phosphate import ATP-binding protein PstB (293 aa).

The region spanning 46–288 (FGIRGVDVFY…PDHELTEAYI (243 aa)) is the ABC transporter domain. 78-85 (GPSGCGKS) is an ATP binding site.

The protein belongs to the ABC transporter superfamily. Phosphate importer (TC 3.A.1.7) family. The complex is composed of two ATP-binding proteins (PstB), two transmembrane proteins (PstC and PstA) and a solute-binding protein (PstS).

The protein resides in the cell inner membrane. It catalyses the reaction phosphate(out) + ATP + H2O = ADP + 2 phosphate(in) + H(+). Part of the ABC transporter complex PstSACB involved in phosphate import. Responsible for energy coupling to the transport system. The chain is Phosphate import ATP-binding protein PstB from Saccharophagus degradans (strain 2-40 / ATCC 43961 / DSM 17024).